The sequence spans 195 residues: HTH-type transcriptional regulator TtmR (195 aa).

One can recognise an HTH marR-type domain in the interval 47 to 177 (DSQLCFAVYA…LLDNLASMRD (131 aa)). Residues 93–116 (VKEIGSRLFLDSGTLTPLLKRLEA) constitute a DNA-binding region (H-T-H motif).

Its subcellular location is the cytoplasm. Its function is as follows. Formaldehyde-responsive transcription factor that modulates resistance to stress induced by formaldehyde. Impacts the expression of a number of genes encoding transcription factors and/or involved in stress response, including efgA, and which probably collectively trigger a formaldehyde-specific physiological response. Required for optimal transition to methylotrophy. Not involved in a general stress response. The sequence is that of HTH-type transcriptional regulator TtmR from Methylorubrum extorquens (strain PA1) (Methylobacterium extorquens).